A 183-amino-acid polypeptide reads, in one-letter code: Inner membrane protein p54 (183 aa).

A helical membrane pass occupies residues 32–52 (YTILIAIVVLVIIIIVLIYLF). The disordered stretch occupies residues 81–157 (EVTPQPGTSK…PYTTVTTQNT (77 aa)). Polar residues predominate over residues 111 to 122 (RPATNKPVTDNP). Residues 130 to 143 (ATGGPAAAPAAASA) are compositionally biased toward low complexity. The segment at 149–161 (YTTVTTQNTASQT) is interaction with host DYNLL1.

This sequence belongs to the asfivirus envelope protein p54 family. As to quaternary structure, interacts with the host light chain cytoplasmic dynein DYNLL1; this interaction is critical for intracellular microtubule-dependent virus transport toward viral factories.

Its subcellular location is the virion membrane. It is found in the host cytoplasm. The protein localises to the host cytoskeleton. The protein resides in the host endoplasmic reticulum membrane. Its function is as follows. Inner envelope protein involved, through its interaction with host dynein, in the intracellular microtubule-dependent transport of viral capsid toward viral factories. Seems to induce caspase-3 activation and apoptosis. Plays a role in virion morphogenesis by recruiting and transforming the host ER membranes into the precursors of the viral envelope. Involved in virus attachment to the host cell. The polypeptide is Inner membrane protein p54 (Ornithodoros (relapsing fever ticks)).